The sequence spans 255 residues: Tabinhibitin 7 (255 aa).

The signal sequence occupies residues 1–23 (MTSILVSSFLLATLVLQYATIDA). The Cell attachment site motif lies at 32-34 (RGD). In terms of domain architecture, SCP spans 67–211 (LSKINDVRDH…KARALLTCNF (145 aa)).

Belongs to the CRISP family. In terms of tissue distribution, expressed in salivary glands.

It localises to the secreted. Functionally, inhibits platelet aggregation induced by all agonists tested (ADP, arachidonic acid, the thromboxane A2 analog U46619, thrombin, and snake venom snaclecs (TMVA that activates platelet through GPIB, and stejnulxin that specifically acts through GPVI (GP6))). May act by competing with fibrinogen for binding to glycoprotein IIb/IIIa (ITGA2B/ITGB3). The polypeptide is Tabinhibitin 7 (Tabanus yao (Horsefly)).